Consider the following 253-residue polypeptide: 5'-nucleotidase SurE (253 aa).

A divalent metal cation contacts are provided by aspartate 8, aspartate 9, serine 40, and asparagine 97.

Belongs to the SurE nucleotidase family. A divalent metal cation serves as cofactor.

Its subcellular location is the cytoplasm. The catalysed reaction is a ribonucleoside 5'-phosphate + H2O = a ribonucleoside + phosphate. Its function is as follows. Nucleotidase that shows phosphatase activity on nucleoside 5'-monophosphates. This chain is 5'-nucleotidase SurE, found in Desulforamulus reducens (strain ATCC BAA-1160 / DSM 100696 / MI-1) (Desulfotomaculum reducens).